The following is an 86-amino-acid chain: Neuropeptide-like 3 (86 aa).

An N-terminal signal peptide occupies residues 1 to 16 (MFKLCVFVALLSLAAA). Propeptides lie at residues 17-50 (APAP…VAPQ) and 63-75 (AITQ…LLIK). Position 85 is an isoleucine amide (Ile85).

It localises to the secreted. This Drosophila yakuba (Fruit fly) protein is Neuropeptide-like 3 (Nplp3).